The sequence spans 84 residues: MVFAYVLVSGFMLVLGIKYGRTKIYSVWKAGLIILAGFAVIFAAAWIAFTGTSASQERIGLAKSLSVVMGLIAGVLSVYVLSKS.

A run of 3 helical transmembrane segments spans residues 4-20 (AYVLVSGFMLVLGIKYG), 27-49 (VWKAGLIILAGFAVIFAAAWIAF), and 59-81 (IGLAKSLSVVMGLIAGVLSVYVL).

The protein localises to the cell membrane. This is an uncharacterized protein from Archaeoglobus fulgidus (strain ATCC 49558 / DSM 4304 / JCM 9628 / NBRC 100126 / VC-16).